We begin with the raw amino-acid sequence, 181 residues long: ATP synthase subunit delta (181 aa).

Belongs to the ATPase delta chain family. F-type ATPases have 2 components, F(1) - the catalytic core - and F(0) - the membrane proton channel. F(1) has five subunits: alpha(3), beta(3), gamma(1), delta(1), epsilon(1). F(0) has three main subunits: a(1), b(2) and c(10-14). The alpha and beta chains form an alternating ring which encloses part of the gamma chain. F(1) is attached to F(0) by a central stalk formed by the gamma and epsilon chains, while a peripheral stalk is formed by the delta and b chains.

The protein resides in the cell inner membrane. Functionally, f(1)F(0) ATP synthase produces ATP from ADP in the presence of a proton or sodium gradient. F-type ATPases consist of two structural domains, F(1) containing the extramembraneous catalytic core and F(0) containing the membrane proton channel, linked together by a central stalk and a peripheral stalk. During catalysis, ATP synthesis in the catalytic domain of F(1) is coupled via a rotary mechanism of the central stalk subunits to proton translocation. This protein is part of the stalk that links CF(0) to CF(1). It either transmits conformational changes from CF(0) to CF(1) or is implicated in proton conduction. The sequence is that of ATP synthase subunit delta from Chlorobium phaeovibrioides (strain DSM 265 / 1930) (Prosthecochloris vibrioformis (strain DSM 265)).